The following is a 56-amino-acid chain: MFRIEYSLVQLLLRNVTIPLLLIIQMHIMSSVKLIQIRIWIQYVTVLQMFSMKTKQ.

The first 31 residues, 1 to 31 (MFRIEYSLVQLLLRNVTIPLLLIIQMHIMSS), serve as a signal peptide directing secretion.

It belongs to the non-disulfide-bridged peptide (NDBP) superfamily. Antimalarial peptide (group 5) family. As to expression, expressed by the venom gland.

The protein resides in the secreted. Its function is as follows. This synthetic cationic peptide inhibits the development of Plasmodium berghei ookinetes, kills intraerythrocytic P.falciparum, and is cytotoxic to the Drosophila S2 cell at micromolar concentrations. No antibacterial, antifungal and hemolytic activities have been found at micromolar concentrations. The polypeptide is Meucin-25 (Mesobuthus eupeus (Lesser Asian scorpion)).